Here is a 424-residue protein sequence, read N- to C-terminus: Arogenate dehydratase 4, chloroplastic (424 aa).

A chloroplast-targeting transit peptide spans 1 to 34 (MQAATSCDLKFRSTDPTSRNKCFSHAIPKRVAVT). Residues 126–303 (RVAYQGVPGA…NVTRFLMLAR (178 aa)) enclose the Prephenate dehydratase domain. Residues 319-410 (VFAAQEHKGT…SFLRVLGSYP (92 aa)) enclose the ACT domain.

Expressed in roots, leaves, stems, flowers and siliques. More abundant in stems and roots.

It is found in the plastid. The protein localises to the chloroplast stroma. It carries out the reaction L-arogenate + H(+) = L-phenylalanine + CO2 + H2O. It functions in the pathway amino-acid biosynthesis; L-phenylalanine biosynthesis; L-phenylalanine from L-arogenate: step 1/1. In terms of biological role, converts the prephenate produced from the shikimate-chorismate pathway into phenylalanine. The polypeptide is Arogenate dehydratase 4, chloroplastic (Arabidopsis thaliana (Mouse-ear cress)).